Consider the following 300-residue polypeptide: MESPESFSTMFMKPIRHILSEKKSRKIALFLLINTAYMVVEFVAGFMSNSLGLISDACHMLFDCAALAIGLYASYISRLPANHQYNYGRGRFEVLSGYVNAVFLVLVGALIVLESIERILDPQEISTNSLLVVSVGGLLVNIVGLIFFHEEHHHAHGGSGIFLHVLADTMGSVGVVISTLLIKYKGWLVADPASSIFISILIIASVIPLLRNSAEILLQRVPRAHRQDLKEAMRNILKTKGVCSIQRLHVWSFTNSDVVATLHLLVSADSDKTDTKLQVSRLLEDAGVKDWTLQVESVNS.

Residues Met-1–Lys-26 lie on the Cytoplasmic side of the membrane. Residues Ile-27 to Met-47 traverse the membrane as a helical segment. Residues Ser-48 to Ser-50 are Vacuolar-facing. A helical membrane pass occupies residues Leu-51–Leu-71. Over Tyr-72–Arg-91 the chain is Cytoplasmic. A helical transmembrane segment spans residues Phe-92–Val-112. At Leu-113–Asn-128 the chain is on the vacuolar side. The helical transmembrane segment at Ser-129–His-149 threads the bilayer. Residues Glu-150 to Gly-160 lie on the Cytoplasmic side of the membrane. The chain crosses the membrane as a helical span at residues Ile-161–Leu-181. Residues Ile-182–Gly-186 lie on the Vacuolar side of the membrane. Residues Trp-187 to Ile-207 form a helical membrane-spanning segment. The Cytoplasmic portion of the chain corresponds to Pro-208–Ser-300.

Belongs to the cation diffusion facilitator (CDF) transporter (TC 2.A.4) family. SLC30A subfamily.

The protein resides in the vacuole membrane. Involved in sequestration of excess metal in the cytoplasm into vacuoles to maintain metal homeostasis. This is Metal tolerance protein 12 (MTP12) from Arabidopsis thaliana (Mouse-ear cress).